The chain runs to 298 residues: 4-hydroxy-tetrahydrodipicolinate synthase (298 aa).

Thr-51 serves as a coordination point for pyruvate. The Proton donor/acceptor role is filled by Tyr-140. The Schiff-base intermediate with substrate role is filled by Lys-168. Residue Ile-210 participates in pyruvate binding.

It belongs to the DapA family. In terms of assembly, homotetramer; dimer of dimers.

The protein localises to the cytoplasm. It catalyses the reaction L-aspartate 4-semialdehyde + pyruvate = (2S,4S)-4-hydroxy-2,3,4,5-tetrahydrodipicolinate + H2O + H(+). It functions in the pathway amino-acid biosynthesis; L-lysine biosynthesis via DAP pathway; (S)-tetrahydrodipicolinate from L-aspartate: step 3/4. Catalyzes the condensation of (S)-aspartate-beta-semialdehyde [(S)-ASA] and pyruvate to 4-hydroxy-tetrahydrodipicolinate (HTPA). The chain is 4-hydroxy-tetrahydrodipicolinate synthase from Acidovorax sp. (strain JS42).